A 193-amino-acid chain; its full sequence is Glycerol-3-phosphate acyltransferase (193 aa).

The next 5 membrane-spanning stretches (helical) occupy residues 2 to 22 (AFIISIIIAYLLGSLSFAVIV), 51 to 71 (QAAFYVLLGDAAKGLIAVLIA), 78 to 98 (GVSLAFVGLVAVLGHLFPVYF), 112 to 132 (VLLGLSFWIALFVIATWVIVV), and 154 to 174 (IIAGRTDYLFPVLIIAILLIW).

It belongs to the PlsY family. As to quaternary structure, probably interacts with PlsX.

The protein resides in the cell inner membrane. The enzyme catalyses an acyl phosphate + sn-glycerol 3-phosphate = a 1-acyl-sn-glycero-3-phosphate + phosphate. It participates in lipid metabolism; phospholipid metabolism. Functionally, catalyzes the transfer of an acyl group from acyl-phosphate (acyl-PO(4)) to glycerol-3-phosphate (G3P) to form lysophosphatidic acid (LPA). This enzyme utilizes acyl-phosphate as fatty acyl donor, but not acyl-CoA or acyl-ACP. This is Glycerol-3-phosphate acyltransferase from Coxiella burnetii (strain CbuG_Q212) (Coxiella burnetii (strain Q212)).